A 278-amino-acid chain; its full sequence is 3-methyl-2-oxobutanoate hydroxymethyltransferase (278 aa).

The Mg(2+) site is built by D44 and D83. Residues 44 to 45, D83, and K112 contribute to the 3-methyl-2-oxobutanoate site; that span reads DS. E114 contacts Mg(2+). E181 functions as the Proton acceptor in the catalytic mechanism.

Belongs to the PanB family. Homodecamer; pentamer of dimers. It depends on Mg(2+) as a cofactor.

Its subcellular location is the cytoplasm. It catalyses the reaction 3-methyl-2-oxobutanoate + (6R)-5,10-methylene-5,6,7,8-tetrahydrofolate + H2O = 2-dehydropantoate + (6S)-5,6,7,8-tetrahydrofolate. The protein operates within cofactor biosynthesis; (R)-pantothenate biosynthesis; (R)-pantoate from 3-methyl-2-oxobutanoate: step 1/2. Functionally, catalyzes the reversible reaction in which hydroxymethyl group from 5,10-methylenetetrahydrofolate is transferred onto alpha-ketoisovalerate to form ketopantoate. This chain is 3-methyl-2-oxobutanoate hydroxymethyltransferase, found in Roseiflexus sp. (strain RS-1).